The chain runs to 416 residues: uncharacterized protein (416 aa).

Residues H29, D31, E144, H215, and H236 each coordinate Zn(2+).

This sequence belongs to the metallo-dependent hydrolases superfamily. Peptidase M19 family. Requires Zn(2+) as cofactor.

It catalyses the reaction an L-aminoacyl-L-amino acid + H2O = 2 an L-alpha-amino acid. This is an uncharacterized protein from Schizosaccharomyces pombe (strain 972 / ATCC 24843) (Fission yeast).